A 683-amino-acid chain; its full sequence is DNA-directed RNA polymerase subunit beta' (683 aa).

Cysteine 69, cysteine 71, cysteine 87, and cysteine 90 together coordinate Zn(2+). The Mg(2+) site is built by aspartate 489, aspartate 491, and aspartate 493.

It belongs to the RNA polymerase beta' chain family. RpoC1 subfamily. As to quaternary structure, in plastids the minimal PEP RNA polymerase catalytic core is composed of four subunits: alpha, beta, beta', and beta''. When a (nuclear-encoded) sigma factor is associated with the core the holoenzyme is formed, which can initiate transcription. The cofactor is Mg(2+). Zn(2+) is required as a cofactor.

The protein resides in the plastid. The protein localises to the chloroplast. It catalyses the reaction RNA(n) + a ribonucleoside 5'-triphosphate = RNA(n+1) + diphosphate. In terms of biological role, DNA-dependent RNA polymerase catalyzes the transcription of DNA into RNA using the four ribonucleoside triphosphates as substrates. This chain is DNA-directed RNA polymerase subunit beta', found in Zea mays (Maize).